The sequence spans 153 residues: UPF0756 membrane protein Lm4b_01579 (153 aa).

The next 4 membrane-spanning stretches (helical) occupy residues 6–26, 54–74, 80–100, and 117–137; these read MLFLLLFLLLGLIAKNNSLII, WGVTIITVAILIPIATGQIGF, SFKSAAGWIGLGAGIAVSILA, and LVFGTILAVVLFRGIAAGPVI.

Belongs to the UPF0756 family.

It is found in the cell membrane. This Listeria monocytogenes serotype 4b (strain CLIP80459) protein is UPF0756 membrane protein Lm4b_01579.